Here is a 131-residue protein sequence, read N- to C-terminus: Sirohydrochlorin cobaltochelatase (131 aa).

The active-site Proton acceptor is His-12. The Co(2+) site is built by His-12 and His-78. Residues His-12 and His-78 each contribute to the Ni(2+) site. Residue Leu-73 to His-78 participates in substrate binding.

The protein belongs to the CbiX family. CbiXS subfamily. Homotetramer; dimer of dimers.

It catalyses the reaction Co-sirohydrochlorin + 2 H(+) = sirohydrochlorin + Co(2+). It carries out the reaction Ni-sirohydrochlorin + 2 H(+) = sirohydrochlorin + Ni(2+). The protein operates within cofactor biosynthesis; adenosylcobalamin biosynthesis; cob(II)yrinate a,c-diamide from sirohydrochlorin (anaerobic route): step 1/10. Functionally, catalyzes the insertion of Co(2+) into sirohydrochlorin as part of the anaerobic pathway to cobalamin biosynthesis. Involved in the biosynthesis of the unique nickel-containing tetrapyrrole coenzyme F430, the prosthetic group of methyl-coenzyme M reductase (MCR), which plays a key role in methanogenesis and anaerobic methane oxidation. Catalyzes the insertion of Ni(2+) into sirohydrochlorin to yield Ni-sirohydrochlorin. The polypeptide is Sirohydrochlorin cobaltochelatase (Methanococcoides burtonii (strain DSM 6242 / NBRC 107633 / OCM 468 / ACE-M)).